A 1058-amino-acid polypeptide reads, in one-letter code: Outer capsid protein VP4 (1058 aa).

It belongs to the orthoreovirus lambda-2 protein family.

It is found in the virion. It carries out the reaction a 5'-end diphospho-ribonucleoside in mRNA + GTP + H(+) = a 5'-end (5'-triphosphoguanosine)-ribonucleoside in mRNA + diphosphate. It catalyses the reaction a 5'-end (5'-triphosphoguanosine)-ribonucleoside in mRNA + S-adenosyl-L-methionine = a 5'-end (N(7)-methyl 5'-triphosphoguanosine)-ribonucleoside in mRNA + S-adenosyl-L-homocysteine. Functionally, outer capsid protein involved in mRNA capping. Catalyzes the last 3 enzymatic activities for formation of the 5' cap structure on the viral plus-strand transcripts, namely the RNA guanylyltransferase, RNA-7N- and RNA-2'O-methyltransferase activities. This is Outer capsid protein VP4 (S4) from Lymantria dispar cypovirus 1 (isolate Rao) (LdCPV-1).